Consider the following 512-residue polypeptide: PTS system mannitol-specific EIICB component (512 aa).

Residues 1–28 (MSQTEEKKGIGRRVQAFGSFLSSMIMPN) lie on the Cytoplasmic side of the membrane. In terms of domain architecture, PTS EIIC type-2 spans 17-349 (FGSFLSSMIM…MKFTREPKQD (333 aa)). Residues 29–50 (IGAFIAWGFIAAIFIDNGWLPN) traverse the membrane as a helical segment. Over 51 to 54 (KDLA) the chain is Extracellular. The helical transmembrane segment at 55–75 (TLAGPMITYLIPLLIAFSGGR) threads the bilayer. The Cytoplasmic segment spans residues 76-139 (LIYDLRGGII…QGFEMLFNNF (64 aa)). Residues 140 to 161 (SAGILGFIMTIAGFKILAPLMK) traverse the membrane as a helical segment. At 162-170 (FIMHILSVA) the chain is on the extracellular side. A helical membrane pass occupies residues 171–191 (VEALVHAHLLPLVSILVEPAK). Residues 192–278 (IVFLNNAINH…VLMRPLLFIA (87 aa)) are Cytoplasmic-facing. Residues 279–298 (VILGGMTGVATYQATGFGFK) traverse the membrane as a helical segment. The Extracellular portion of the chain corresponds to 299-318 (SPASPGSFIVYCLNAPRGEF). The helical transmembrane segment at 319–340 (LHMLLGVFLAALVSFVVAALIM) threads the bilayer. The Cytoplasmic segment spans residues 341 to 512 (KFTREPKQDL…LNNLKKDDQA (172 aa)). The disordered stretch occupies residues 355 to 402 (AQMENTKGKKSSVASKLVSSDKNVNTEENASGNVSETSSSDDDPEALL). Residues 365–376 (SSVASKLVSSDK) are compositionally biased toward low complexity. Residues 380 to 392 (TEENASGNVSETS) are compositionally biased toward polar residues. The PTS EIIB type-2 domain maps to 419 to 512 (NHVIFACDAG…LNNLKKDDQA (94 aa)). Cysteine 425 acts as the Phosphocysteine intermediate; for EIIB activity in catalysis. Residue cysteine 425 is modified to Phosphocysteine; by EIIA.

Homodimer.

The protein resides in the cell membrane. It catalyses the reaction D-mannitol(out) + N(pros)-phospho-L-histidyl-[protein] = D-mannitol 1-phosphate(in) + L-histidyl-[protein]. Its function is as follows. The phosphoenolpyruvate-dependent sugar phosphotransferase system (sugar PTS), a major carbohydrate active transport system, catalyzes the phosphorylation of incoming sugar substrates concomitantly with their translocation across the cell membrane. The enzyme II CmtAB PTS system is involved in D-mannitol transport. This chain is PTS system mannitol-specific EIICB component (mtlA), found in Staphylococcus aureus (strain COL).